Reading from the N-terminus, the 1113-residue chain is Antigenic protein P1 (1113 aa).

The chain crosses the membrane as a helical span at residues Ile7 to Val27. 17 N-linked (GlcNAc...) asparagine glycosylation sites follow: Asn121, Asn207, Asn225, Asn233, Asn274, Asn533, Asn576, Asn622, Asn675, Asn679, Asn730, Asn753, Asn880, Asn899, Asn907, Asn972, and Asn995. Positions Val159 to Gly473 constitute a Peptidase M60 domain. A PA14 domain is found at Leu648–Lys800.

It localises to the membrane. This chain is Antigenic protein P1, found in Entamoeba histolytica (strain ATCC 30459 / HM-1:IMSS / ABRM).